The chain runs to 147 residues: Thyrotropin subunit beta (147 aa).

A signal peptide spans 1-20 (MRVVLLASAVLCLLAGQVLS). 6 disulfide bridges follow: C22–C72, C36–C87, C39–C126, C47–C103, C51–C105, and C108–C115. N43 is a glycosylation site (N-linked (GlcNAc...) asparagine).

This sequence belongs to the glycoprotein hormones subunit beta family. Heterodimer of a common alpha chain and a unique beta chain which confers biological specificity to thyrotropin, lutropin, follitropin and gonadotropin.

It localises to the secreted. Functionally, indispensable for the control of thyroid structure and metabolism. May play some role in the biological processes of the immature fishes. This Anguilla anguilla (European freshwater eel) protein is Thyrotropin subunit beta (tshb).